A 255-amino-acid chain; its full sequence is TIR domain-containing protein (255 aa).

The 177-residue stretch at 9–185 (LSDQVFINFR…DIVKEVKKQL (177 aa)) folds into the TIR domain. The active site involves Glu-83. 2 helical membrane-spanning segments follow: residues 195 to 215 (AIGVAFLAITINLIFSFFIAP) and 223 to 243 (FFQTPEWFIGTLAVVLASWFW). The KASH domain maps to 201–255 (LAITINLIFSFFIAPKYLPDQKFFQTPEWFIGTLAVVLASWFWYKNNQNKAPPPS).

Forms homomers. Interacts with SUN1, SUN2, SUN3, SUN4 and SUN5.

It is found in the nucleus membrane. The catalysed reaction is NAD(+) + H2O = ADP-D-ribose + nicotinamide + H(+). Could play a role in nuclear morphology, specifically nuclear size. This Arabidopsis thaliana (Mouse-ear cress) protein is TIR domain-containing protein.